The following is an 804-amino-acid chain: Probable phosphoketolase (804 aa).

The protein belongs to the XFP family. Thiamine diphosphate serves as cofactor.

The protein is Probable phosphoketolase of Mycolicibacterium paratuberculosis (strain ATCC BAA-968 / K-10) (Mycobacterium paratuberculosis).